The chain runs to 230 residues: Type II restriction enzyme NlaIII (230 aa).

It carries out the reaction Endonucleolytic cleavage of DNA to give specific double-stranded fragments with terminal 5'-phosphates.. Its function is as follows. A P subtype restriction enzyme that recognizes the double-stranded sequence 5'-CATG-3' and cleaves after G-4. This is Type II restriction enzyme NlaIII (nlaIIIR) from Neisseria lactamica.